The primary structure comprises 413 residues: Probable glucan 1,3-beta-glucosidase ARB_04467 (413 aa).

An N-terminal signal peptide occupies residues 1-17; that stretch reads MKFGSLLGLSLVGLSVA. Substrate-binding residues include glutamate 46, glutamate 202, and tyrosine 262. Glutamate 202 functions as the Proton donor in the catalytic mechanism. Cysteine 282 and cysteine 412 form a disulfide bridge. Residue glutamate 300 is the Nucleophile of the active site.

Belongs to the glycosyl hydrolase 5 (cellulase A) family. As to quaternary structure, monomer.

The protein resides in the secreted. Its subcellular location is the cell wall. The catalysed reaction is Successive hydrolysis of beta-D-glucose units from the non-reducing ends of (1-&gt;3)-beta-D-glucans, releasing alpha-glucose.. Major glucan 1,3-beta-glucosidase required for cell wall integrity. Beta-glucanases participate in the metabolism of beta-glucan, the main structural component of the cell wall. Can also function biosynthetically as a transglycosylase. Functions to deliver glucan from the cell to the extracellular matrix. Involved in cell-substrate and cell-cell adhesion. The sequence is that of Probable glucan 1,3-beta-glucosidase ARB_04467 from Arthroderma benhamiae (strain ATCC MYA-4681 / CBS 112371) (Trichophyton mentagrophytes).